We begin with the raw amino-acid sequence, 294 residues long: 33 kDa chaperonin (294 aa).

Cystine bridges form between cysteine 231–cysteine 233 and cysteine 264–cysteine 267.

Belongs to the HSP33 family. Post-translationally, under oxidizing conditions two disulfide bonds are formed involving the reactive cysteines. Under reducing conditions zinc is bound to the reactive cysteines and the protein is inactive.

The protein localises to the cytoplasm. Its function is as follows. Redox regulated molecular chaperone. Protects both thermally unfolding and oxidatively damaged proteins from irreversible aggregation. Plays an important role in the bacterial defense system toward oxidative stress. The chain is 33 kDa chaperonin from Aeromonas salmonicida (strain A449).